The primary structure comprises 813 residues: Tax1-binding protein 1 homolog (813 aa).

Residues S124, S138, and S225 each carry the phosphoserine modification. Residues T144 to E627 adopt a coiled-coil conformation. The interval E320–D420 is oligomerization. Over residues D489–T502 the composition is skewed to polar residues. The segment at D489–S508 is disordered. 3 positions are modified to phosphoserine: S617, S633, and S690. The disordered stretch occupies residues Y663–H738. 2 consecutive UBZ1-type zinc fingers follow at residues H751–H777 and W778–H804. Zn(2+)-binding residues include C754, C757, H773, H777, C781, C784, H800, and H804.

In terms of assembly, homooligomer. Interacts with TNFAIP3. Interacts with STARD13. Interacts with MYO6. Interacts with TOM1; the interaction is indirect and is mediated by MYO6, which acts as a bridge between TOM1 and TAX1BP1. Interacts with MAVS; this interaction induces MAVS polyubiquitination. Interacts with TNIP1. Interacts with TRAF6; this interaction mediates deubiquitination of TRAF6 and inhibition of NF-kappa-B activation. Interacts with RIPK1; this interaction negatively regulates RIPK1 ubiquitination. Interacts with NBR1. Interacts with TBK1. Interacts with RB1CC1. Interacts with SQSTM1. Interacts with AZI2.

It is found in the cytoplasm. The protein localises to the mitochondrion. The protein resides in the preautophagosomal structure. It localises to the cytoplasmic vesicle. Its subcellular location is the autophagosome. Its function is as follows. Ubiquitin-binding adapter that participates in inflammatory, antiviral and innate immune processes as well as selective autophagy regulation. Plays a key role in the negative regulation of NF-kappa-B and IRF3 signalings by acting as an adapter for the ubiquitin-editing enzyme A20/TNFAIP3 to bind and inactivate its substrates. Disrupts the interactions between the E3 ubiquitin ligase TRAF3 and TBK1/IKBKE to attenuate 'Lys63'-linked polyubiquitination of TBK1 and thereby IFN-beta production. Also recruits A20/TNFAIP3 to ubiquitinated signaling proteins TRAF6 and RIPK1, leading to their deubiquitination and disruption of IL-1 and TNF-induced NF-kappa-B signaling pathways. Inhibits virus-induced apoptosis by inducing the 'Lys-48'-linked polyubiquitination and degradation of MAVS via recruitment of the E3 ligase ITCH, thereby attenuating MAVS-mediated apoptosis signaling. As a macroautophagy/autophagy receptor, facilitates the xenophagic clearance of pathogenic bacteria such as Salmonella typhimurium and Mycobacterium tuberculosis. Upon NBR1 recruitment to the SQSTM1-ubiquitin condensates, acts as the major recruiter of RB1CC1 to these ubiquitin condensates to promote their autophagic degradation. The protein is Tax1-binding protein 1 homolog (TAX1BP1) of Pongo abelii (Sumatran orangutan).